We begin with the raw amino-acid sequence, 349 residues long: tRNA (guanine(26)-N(2))-dimethyltransferase (349 aa).

Residues 1–343 (MEVEEGRARV…ADRDVVVKIL (343 aa)) form the Trm1 methyltransferase domain. The S-adenosyl-L-methionine site is built by Arg-25, Arg-50, Asp-66, Asp-92, and Ala-93.

It belongs to the class I-like SAM-binding methyltransferase superfamily. Trm1 family.

The enzyme catalyses guanosine(26) in tRNA + 2 S-adenosyl-L-methionine = N(2)-dimethylguanosine(26) in tRNA + 2 S-adenosyl-L-homocysteine + 2 H(+). Functionally, dimethylates a single guanine residue at position 26 of a number of tRNAs using S-adenosyl-L-methionine as donor of the methyl groups. This is tRNA (guanine(26)-N(2))-dimethyltransferase from Archaeoglobus fulgidus (strain ATCC 49558 / DSM 4304 / JCM 9628 / NBRC 100126 / VC-16).